We begin with the raw amino-acid sequence, 561 residues long: Oxygen-dependent choline dehydrogenase (561 aa).

Residue 7–36 coordinates FAD; the sequence is DYIIVGAGSAGNVLASRLTEDADVTVLLLE. His474 functions as the Proton acceptor in the catalytic mechanism.

Belongs to the GMC oxidoreductase family. FAD is required as a cofactor.

It catalyses the reaction choline + A = betaine aldehyde + AH2. It carries out the reaction betaine aldehyde + NAD(+) + H2O = glycine betaine + NADH + 2 H(+). It functions in the pathway amine and polyamine biosynthesis; betaine biosynthesis via choline pathway; betaine aldehyde from choline (cytochrome c reductase route): step 1/1. In terms of biological role, involved in the biosynthesis of the osmoprotectant glycine betaine. Catalyzes the oxidation of choline to betaine aldehyde and betaine aldehyde to glycine betaine at the same rate. The sequence is that of Oxygen-dependent choline dehydrogenase from Paraburkholderia phytofirmans (strain DSM 17436 / LMG 22146 / PsJN) (Burkholderia phytofirmans).